A 442-amino-acid polypeptide reads, in one-letter code: Probable glycine dehydrogenase (decarboxylating) subunit 1 (442 aa).

This sequence belongs to the GcvP family. N-terminal subunit subfamily. In terms of assembly, the glycine cleavage system is composed of four proteins: P, T, L and H. In this organism, the P 'protein' is a heterodimer of two subunits.

It carries out the reaction N(6)-[(R)-lipoyl]-L-lysyl-[glycine-cleavage complex H protein] + glycine + H(+) = N(6)-[(R)-S(8)-aminomethyldihydrolipoyl]-L-lysyl-[glycine-cleavage complex H protein] + CO2. The glycine cleavage system catalyzes the degradation of glycine. The P protein binds the alpha-amino group of glycine through its pyridoxal phosphate cofactor; CO(2) is released and the remaining methylamine moiety is then transferred to the lipoamide cofactor of the H protein. The sequence is that of Probable glycine dehydrogenase (decarboxylating) subunit 1 from Geotalea daltonii (strain DSM 22248 / JCM 15807 / FRC-32) (Geobacter daltonii).